Here is a 429-residue protein sequence, read N- to C-terminus: MISRVFKLRMWAPVGVLTSLTYCLHQRRVALAEPGGADQQNPVDRNLLELKMVQVVFRHGARSPLKPLPQEDQQVEWKSQLLEVPPQTQLEYTVTNLAGGPKPHSPFDSQYHETTLKGGMFAGQLTKVGMEQMFALGERLRKNYVEDIPFLSPTFNPLEVFIRSTNIYRNLESTRCLLAGLFQRQKEGPIVIHTDEASSEVLYPNYQYCWNLQKRTRGRRQAASLQPGISEDLKKVKEGMGIASSDEVDFLVLLDNMAAEQVHSLPSCPTLKRFAWMIEQRAVDTALYILQWEDREGLQMAVGPFLHILESNLLKVVDPATPPSKTRKLYLYAAHDVTLMPLLMTLGIFDHKWPPFAVDLTMELYQHRESKEWFVQLYYRGKEQVPKGCPDGLCPLDKFLNTISVYTLSPEKYHMLCSEAQMMGLGNGE.

The N-terminal 32 residues, 1 to 32 (MISRVFKLRMWAPVGVLTSLTYCLHQRRVALA), are a transit peptide targeting the mitochondrion. The tract at residues 58 to 169 (RHGARSPLKP…VFIRSTNIYR (112 aa)) is substrate binding. Histidine 59 serves as the catalytic Nucleophile. Catalysis depends on aspartate 336, which acts as the Proton donor.

This sequence belongs to the histidine acid phosphatase family. As to quaternary structure, monomer. As to expression, detected in brain (at protein level).

It is found in the mitochondrion. The catalysed reaction is a phosphate monoester + H2O = an alcohol + phosphate. It catalyses the reaction 1-(9Z-octadecenoyl)-sn-glycero-3-phosphate + H2O = 1-(9Z-octadecenoyl)-sn-glycerol + phosphate. In terms of biological role, hydrolyzes lysophosphatidic acid (LPA) containing a medium length fatty acid chain to the corresponding monoacylglycerol. Has highest activity with lysophosphatidic acid containing myristate (C14:0), monounsaturated oleate (C18:1) or palmitate (C16:0), and lower activity with C18:0 and C6:0 lysophosphatidic acid. The protein is Lysophosphatidic acid phosphatase type 6 (ACP6) of Bos taurus (Bovine).